We begin with the raw amino-acid sequence, 257 residues long: NAD kinase (257 aa).

Residue Asp-44 is the Proton acceptor of the active site. NAD(+) is bound by residues 44–45 (DG), Arg-49, 116–117 (NE), Asp-146, Ala-154, and 157–162 (TAYNLS).

It belongs to the NAD kinase family. Requires a divalent metal cation as cofactor.

The protein localises to the cytoplasm. The catalysed reaction is NAD(+) + ATP = ADP + NADP(+) + H(+). Involved in the regulation of the intracellular balance of NAD and NADP, and is a key enzyme in the biosynthesis of NADP. Catalyzes specifically the phosphorylation on 2'-hydroxyl of the adenosine moiety of NAD to yield NADP. This is NAD kinase from Rhizorhabdus wittichii (strain DSM 6014 / CCUG 31198 / JCM 15750 / NBRC 105917 / EY 4224 / RW1) (Sphingomonas wittichii).